The sequence spans 59 residues: Large ribosomal subunit protein bL32c (59 aa).

Positions 37-59 (SRSFSSGNEHPKPKGFSGQQTNK) are disordered.

It belongs to the bacterial ribosomal protein bL32 family.

It localises to the plastid. It is found in the chloroplast. The chain is Large ribosomal subunit protein bL32c from Hordeum vulgare (Barley).